The following is a 328-amino-acid chain: Tetraacyldisaccharide 4'-kinase (328 aa).

52 to 59 serves as a coordination point for ATP; it reads NAGGTGKT.

The protein belongs to the LpxK family.

It catalyses the reaction a lipid A disaccharide + ATP = a lipid IVA + ADP + H(+). It functions in the pathway glycolipid biosynthesis; lipid IV(A) biosynthesis; lipid IV(A) from (3R)-3-hydroxytetradecanoyl-[acyl-carrier-protein] and UDP-N-acetyl-alpha-D-glucosamine: step 6/6. Its function is as follows. Transfers the gamma-phosphate of ATP to the 4'-position of a tetraacyldisaccharide 1-phosphate intermediate (termed DS-1-P) to form tetraacyldisaccharide 1,4'-bis-phosphate (lipid IVA). In Jannaschia sp. (strain CCS1), this protein is Tetraacyldisaccharide 4'-kinase.